The sequence spans 219 residues: Kappa-scoloptoxin(11)-Ss1a (219 aa).

Residues 1 to 16 form the signal peptide; that stretch reads MFYSHLLFFTFTFACS. A propeptide spanning residues 17–25 is cleaved from the precursor; sequence SSLNRKTKR.

In terms of processing, contains 8 disulfide bonds. As to expression, expressed by the venom gland.

Its subcellular location is the secreted. Functionally, voltage-gated potassium channel inhibitor. This is Kappa-scoloptoxin(11)-Ss1a from Scolopendra dehaani (Thai centipede).